The sequence spans 607 residues: Tyrosine-protein kinase RYK (607 aa).

A disordered region spans residues 1 to 20 (MRGAARLGRPGRSCLPGARG). Positions 1–25 (MRGAARLGRPGRSCLPGARGLRAPP) are cleaved as a signal peptide. Over 26-227 (PPPLLLLLAL…VHAAPTTSTR (202 aa)) the chain is Extracellular. The 129-residue stretch at 66–194 (LYLSEDEVRR…VLNFKRRKMC (129 aa)) folds into the WIF domain. 5 N-linked (GlcNAc...) asparagine glycosylation sites follow: Asn-139, Asn-174, Asn-178, Asn-182, and Asn-209. Residues Cys-159 and Cys-194 are joined by a disulfide bond. The helical transmembrane segment at 228-248 (VFYISVGVCCAVIFLVAIILA) threads the bilayer. At 249 to 607 (VLHLHSMKRI…EFHAALGAYV (359 aa)) the chain is on the cytoplasmic side. The span at 266–282 (ASSSSQGLSQPSTQTTQ) shows a compositional bias: low complexity. The segment at 266-290 (ASSSSQGLSQPSTQTTQYLRADTPN) is disordered. The Protein kinase domain maps to 330 to 603 (ITLKDVLQEG…QCLTEFHAAL (274 aa)). ATP is bound by residues 336–344 (LQEGTFGRI) and Lys-364. The Proton acceptor role is filled by Asp-465. Position 495 is a phosphotyrosine; by autocatalysis (Tyr-495).

It belongs to the protein kinase superfamily. Tyr protein kinase family. Interacts with DVL1 (via PDZ domain). Post-translationally, proteolytically cleaved, in part by presenilin, in response to WNT3 stimulation. Cleavage occurs during neuronal differentiation. Observed in all the tissues examined.

Its subcellular location is the membrane. It localises to the nucleus. It is found in the cytoplasm. It catalyses the reaction L-tyrosyl-[protein] + ATP = O-phospho-L-tyrosyl-[protein] + ADP + H(+). Its function is as follows. May be a coreceptor along with FZD8 of Wnt proteins, such as WNT1, WNT3, WNT3A and WNT5A. Involved in neuron differentiation, axon guidance, corpus callosum establishment and neurite outgrowth. In response to WNT3 stimulation, receptor C-terminal cleavage occurs in its transmembrane region and allows the C-terminal intracellular product to translocate from the cytoplasm to the nucleus where it plays a crucial role in neuronal development. This chain is Tyrosine-protein kinase RYK, found in Homo sapiens (Human).